Here is a 305-residue protein sequence, read N- to C-terminus: Methionyl-tRNA formyltransferase (305 aa).

Position 108–111 (108–111 (SLLP)) interacts with (6S)-5,6,7,8-tetrahydrofolate.

Belongs to the Fmt family.

It carries out the reaction L-methionyl-tRNA(fMet) + (6R)-10-formyltetrahydrofolate = N-formyl-L-methionyl-tRNA(fMet) + (6S)-5,6,7,8-tetrahydrofolate + H(+). Attaches a formyl group to the free amino group of methionyl-tRNA(fMet). The formyl group appears to play a dual role in the initiator identity of N-formylmethionyl-tRNA by promoting its recognition by IF2 and preventing the misappropriation of this tRNA by the elongation apparatus. In Clavibacter sepedonicus (Clavibacter michiganensis subsp. sepedonicus), this protein is Methionyl-tRNA formyltransferase.